A 121-amino-acid polypeptide reads, in one-letter code: Large ribosomal subunit protein bL12 (121 aa).

Belongs to the bacterial ribosomal protein bL12 family. Homodimer. Part of the ribosomal stalk of the 50S ribosomal subunit. Forms a multimeric L10(L12)X complex, where L10 forms an elongated spine to which 2 to 4 L12 dimers bind in a sequential fashion. Binds GTP-bound translation factors.

Forms part of the ribosomal stalk which helps the ribosome interact with GTP-bound translation factors. Is thus essential for accurate translation. The polypeptide is Large ribosomal subunit protein bL12 (Lactobacillus delbrueckii subsp. bulgaricus (strain ATCC BAA-365 / Lb-18)).